The primary structure comprises 332 residues: NADH-quinone oxidoreductase subunit H (332 aa).

Helical transmembrane passes span 4–24 (FAFFALEALIKCIIIIAIFAS), 44–64 (IGPDMVGPFGLIQLVADMIKL), 78–98 (FIFAIAPLISAICAFVSLAAI), 120–140 (VALLFVIGTSGLCFYAVFLGG), 165–185 (VGALALIAIVMLVGSFSLVDI), 194–214 (FSWLIFKQPLAFVLFIIALFI), 255–275 (IAGAILVTLLFLGGFNGFWII), 279–299 (IMMIVKSSFIFFWYFWARAAF), and 312–332 (YLILIPLAVVNLLITALAVLL).

The protein belongs to the complex I subunit 1 family. NDH-1 is composed of 14 different subunits. Subunits NuoA, H, J, K, L, M, N constitute the membrane sector of the complex.

It localises to the cell inner membrane. It carries out the reaction a quinone + NADH + 5 H(+)(in) = a quinol + NAD(+) + 4 H(+)(out). Functionally, NDH-1 shuttles electrons from NADH, via FMN and iron-sulfur (Fe-S) centers, to quinones in the respiratory chain. The immediate electron acceptor for the enzyme in this species is believed to be ubiquinone. Couples the redox reaction to proton translocation (for every two electrons transferred, four hydrogen ions are translocated across the cytoplasmic membrane), and thus conserves the redox energy in a proton gradient. This subunit may bind ubiquinone. In Campylobacter jejuni subsp. doylei (strain ATCC BAA-1458 / RM4099 / 269.97), this protein is NADH-quinone oxidoreductase subunit H.